A 261-amino-acid polypeptide reads, in one-letter code: Mediator of RNA polymerase II transcription subunit 7 (261 aa).

Over residues 31 to 45 (LEDIKKEASKGEDGK) the composition is skewed to basic and acidic residues. Residues 31–54 (LEDIKKEASKGEDGKPRKKKWTPA) form a disordered region.

It belongs to the Mediator complex subunit 7 family. As to quaternary structure, component of the Mediator complex.

It is found in the nucleus. In terms of biological role, component of the Mediator complex, a coactivator involved in the regulated transcription of nearly all RNA polymerase II-dependent genes. Mediator functions as a bridge to convey information from gene-specific regulatory proteins to the basal RNA polymerase II transcription machinery. Mediator is recruited to promoters by direct interactions with regulatory proteins and serves as a scaffold for the assembly of a functional preinitiation complex with RNA polymerase II and the general transcription factors. This chain is Mediator of RNA polymerase II transcription subunit 7 (med7), found in Aspergillus fumigatus (strain ATCC MYA-4609 / CBS 101355 / FGSC A1100 / Af293) (Neosartorya fumigata).